A 453-amino-acid polypeptide reads, in one-letter code: Wall-associated protein (453 aa).

A signal peptide spans 1 to 29 (MKMKRKLLSLVSVLTILLGAFWVTKIVKA). Residues 331–403 (GRASSRVKRQ…TASQTNVPTT (73 aa)) are disordered. Residues 342 to 403 (ETTTVTETTT…TASQTNVPTT (62 aa)) are compositionally biased toward low complexity. Positions 422-426 (LPSTG) match the LPXTG sorting signal motif. T425 carries the post-translational modification Pentaglycyl murein peptidoglycan amidated threonine. Residues 426-453 (GEQAGLLLTTVGLVIVAVAGVYFYRTRR) constitute a propeptide, removed by sortase.

The protein localises to the secreted. It is found in the cell wall. This Streptococcus mutans serotype c (strain ATCC 700610 / UA159) protein is Wall-associated protein (wapA).